The primary structure comprises 259 residues: MVAMDPTGPSESIYNLIPSDWKEPPQPPRYVSIFKATVKDDMQKFKTAMKTMGPAKLEVPSPKDFLKKHSKEKILPPKKKFEWNERRKPPVPLRTDHPVMGIQSEKNFINTNAADVIMGVAKKPKPIYVDKRTGDKHDLETSGLVPKYINKKDYGVTPEYICKRNEEVKKAQEEYDNYIQENLRKAAMKRLSDEEREAVLQGLKKNWEEVHKEFQSLSVFIDSIPKKIRKQKLEEEMKQLEHDIGVLEKHKVIYIANKK.

Disordered regions lie at residues 1 to 26 (MVAM…EPPQ) and 76 to 98 (PPKK…TDHP). A compositionally biased stretch (basic and acidic residues) spans 76–88 (PPKKKFEWNERRK). The SH3-binding signature appears at 86–92 (RRKPPVP). The Enkurin domain maps to 163 to 255 (KRNEEVKKAQ…VLEKHKVIYI (93 aa)). Positions 163–258 (KRNEEVKKAQ…KHKVIYIANK (96 aa)) are interaction with TRPC proteins. An IQ domain is found at 179–190 (IQENLRKAAMKR).

In terms of assembly, microtubule inner protein component of sperm flagellar doublet microtubules. Binds calmodulin via its IQ domain. Interacts with TRPC1, TRPC2, TRPC5, but not TRPC3. Interacts with CFAP45. Expressed in trachea multiciliated cells.

It is found in the cytoplasm. Its subcellular location is the cytoskeleton. The protein localises to the flagellum axoneme. The protein resides in the cilium axoneme. Functionally, adapter that functions to localize a calcium-sensitive signal transduction machinery in sperm to a calcium-permeable ion channel. Microtubule inner protein (MIP) part of the dynein-decorated doublet microtubules (DMTs) in cilia axoneme, which is required for motile cilia beating. This chain is Enkurin (ENKUR), found in Bos taurus (Bovine).